Consider the following 359-residue polypeptide: MILNSSTEDGIKRIQDDCPKAGRHSYIFVMIPTLYSIIFVVGIFGNSLVVIVIYFYMKLKTVASVFLLNLALADICFLLTLPLWAVYTAMEYRWPFGNYLCKIASASVSFNLYASVFLLTCLSIDRYLAIVHPMKSRLRRTMLVAKVTCVIIWLMAGLASLPAVIHRNVFFIENTNITVCAFHYESQNSTLPIGLGLTKNILGFMFPFLIILTSYTLIWKALKKAYEIQKNKPRNDDIFKIIMAIVLFFFFSWVPHQIFTFLDVLIQLGIIHDCKISDIVDTAMPITICIAYFNNCLNPLFYGFLGKKFKKYFLQLLKYIPPKAKSHSTLSTKMSTLSYRPSDNVSSSAKKPVQCFEVE.

Over 1-25 the chain is Extracellular; that stretch reads MILNSSTEDGIKRIQDDCPKAGRHS. Asn4 carries an N-linked (GlcNAc...) asparagine glycan. Residues Gln15 and Asp17 each coordinate angiotensin II. Disulfide bonds link Cys18/Cys274 and Cys101/Cys180. Residues 26-55 form a helical membrane-spanning segment; that stretch reads YIFVMIPTLYSIIFVVGIFGNSLVVIVIYF. At 56–61 the chain is on the cytoplasmic side; it reads YMKLKT. The chain crosses the membrane as a helical span at residues 62–89; it reads VASVFLLNLALADICFLLTLPLWAVYTA. The Extracellular segment spans residues 90 to 98; that stretch reads MEYRWPFGN. A helical transmembrane segment spans residues 99-125; sequence YLCKIASASVSFNLYASVFLLTCLSID. At 126 to 141 the chain is on the cytoplasmic side; it reads RYLAIVHPMKSRLRRT. A helical membrane pass occupies residues 142–165; sequence MLVAKVTCVIIWLMAGLASLPAVI. Residues 166-190 are Extracellular-facing; that stretch reads HRNVFFIENTNITVCAFHYESQNST. Arg167 contacts angiotensin II. Asn176 carries an N-linked (GlcNAc...) asparagine glycan. Angiotensin II is bound by residues Phe182, His183, and Tyr184. The N-linked (GlcNAc...) asparagine glycan is linked to Asn188. A helical membrane pass occupies residues 191–216; it reads LPIGLGLTKNILGFMFPFLIILTSYT. Residue Lys199 coordinates angiotensin II. Residues 217 to 239 lie on the Cytoplasmic side of the membrane; the sequence is LIWKALKKAYEIQKNKPRNDDIF. A helical transmembrane segment spans residues 240–268; that stretch reads KIIMAIVLFFFFSWVPHQIFTFLDVLIQL. At 269–278 the chain is on the extracellular side; sequence GIIHDCKISD. Residues 279 to 304 form a helical membrane-spanning segment; the sequence is IVDTAMPITICIAYFNNCLNPLFYGF. Topologically, residues 305-359 are cytoplasmic; the sequence is LGKKFKKYFLQLLKYIPPKAKSHSTLSTKMSTLSYRPSDNVSSSAKKPVQCFEVE. Positions 337-349 are enriched in polar residues; sequence LSYRPSDNVSSSA. Positions 337–359 are disordered; that stretch reads LSYRPSDNVSSSAKKPVQCFEVE. Cys355 is lipidated: S-palmitoyl cysteine.

This sequence belongs to the G-protein coupled receptor 1 family. As to quaternary structure, interacts with MAS1. Interacts with ARRB1. Interacts with FLNA (via filamin repeat 21); increases PKA-mediated phosphorylation of FLNA. Post-translationally, C-terminal Ser or Thr residues may be phosphorylated. As to expression, expressed in liver, kidney, adrenal gland, heart and colon.

It localises to the cell membrane. Its function is as follows. Receptor for angiotensin II, a vasoconstricting peptide, which acts as a key regulator of blood pressure and sodium retention by the kidney. The activated receptor in turn couples to G-alpha proteins G(q) (GNAQ, GNA11, GNA14 or GNA15) and thus activates phospholipase C and increases the cytosolic Ca(2+) concentrations, which in turn triggers cellular responses such as stimulation of protein kinase C. This Cavia porcellus (Guinea pig) protein is Type-1 angiotensin II receptor (AGTR1).